Reading from the N-terminus, the 82-residue chain is Small ribosomal subunit protein bS18 (82 aa).

Belongs to the bacterial ribosomal protein bS18 family. In terms of assembly, part of the 30S ribosomal subunit. Forms a tight heterodimer with protein bS6.

In terms of biological role, binds as a heterodimer with protein bS6 to the central domain of the 16S rRNA, where it helps stabilize the platform of the 30S subunit. This chain is Small ribosomal subunit protein bS18, found in Chlamydia caviae (strain ATCC VR-813 / DSM 19441 / 03DC25 / GPIC) (Chlamydophila caviae).